We begin with the raw amino-acid sequence, 174 residues long: RNA pyrophosphohydrolase (174 aa).

One can recognise a Nudix hydrolase domain in the interval 6–149 (GFRANVGIII…KRDVYRKVMK (144 aa)). The short motif at 38–59 (GGVDDGETAEEAMYRELYEEVG) is the Nudix box element.

Belongs to the Nudix hydrolase family. RppH subfamily. Requires a divalent metal cation as cofactor.

Accelerates the degradation of transcripts by removing pyrophosphate from the 5'-end of triphosphorylated RNA, leading to a more labile monophosphorylated state that can stimulate subsequent ribonuclease cleavage. This chain is RNA pyrophosphohydrolase, found in Shewanella sp. (strain MR-7).